Here is a 424-residue protein sequence, read N- to C-terminus: Protein CapL (424 aa).

It belongs to the UDP-glucose/GDP-mannose dehydrogenase family.

It participates in capsule biogenesis; capsule polysaccharide biosynthesis. Required for the biosynthesis of type 1 capsular polysaccharide. This chain is Protein CapL (capL), found in Staphylococcus aureus.